Consider the following 349-residue polypeptide: Sensory histidine kinase/phosphatase NtrB (349 aa).

In terms of domain architecture, PAS spans 5–78; it reads IQPDAGQILN…SLAAGQGFTD (74 aa). The 214-residue stretch at 136–349 folds into the Histidine kinase domain; sequence GLAHEIKNPL…EFSVYLPIRK (214 aa). H139 carries the post-translational modification Phosphohistidine; by autocatalysis. K329 lines the ATP pocket.

Autophosphorylated.

The protein resides in the cytoplasm. It carries out the reaction ATP + protein L-histidine = ADP + protein N-phospho-L-histidine.. Its function is as follows. Member of the two-component regulatory system NtrB/NtrC, which controls expression of the nitrogen-regulated (ntr) genes in response to nitrogen limitation. Under conditions of nitrogen limitation, NtrB autophosphorylates and transfers the phosphoryl group to NtrC. In the presence of nitrogen, acts as a phosphatase that dephosphorylates and inactivates NtrC. The sequence is that of Sensory histidine kinase/phosphatase NtrB (glnL) from Salmonella typhi.